We begin with the raw amino-acid sequence, 192 residues long: Transcription termination/antitermination protein NusG (192 aa).

It belongs to the NusG family.

Functionally, participates in transcription elongation, termination and antitermination. The sequence is that of Transcription termination/antitermination protein NusG from Rickettsia prowazekii (strain Madrid E).